A 571-amino-acid chain; its full sequence is Streptolysin O (571 aa).

The N-terminal stretch at 1–33 is a signal peptide; that stretch reads MSNKKTFKKYSRVAGLLTVALIIGNLVTANAES. Disordered stretches follow at residues 32–56 and 81–108; these read ESNK…ESSE and KEMP…HTEE. Low complexity predominate over residues 37-48; sequence NTASTETTTTNE. Beta stranded transmembrane passes span 260-273, 280-289, 358-367, and 375-387; these read KSQI…NSKI, IDFKSISKGE, SNDVEAAFSA, and KTNG…LENS. Residues 529–539 carry the Conserved undecapeptide motif; the sequence is ECTGLAWEWWR. Thr561 is a short sequence motif (cholesterol binding).

This sequence belongs to the cholesterol-dependent cytolysin family. Homooligomeric pore complex of 35 to 50 subunits; when inserted in the host membrane.

The protein resides in the secreted. Its subcellular location is the host cell membrane. A cholesterol-dependent toxin that causes cytolysis by forming pores in cholesterol containing host membranes. After binding to target membranes, the protein undergoes a major conformation change, leading to its insertion in the host membrane and formation of an oligomeric pore complex. Cholesterol is required for binding to host membranes, membrane insertion and pore formation; cholesterol binding is mediated by a Thr-Leu pair in the C-terminus. Can be reversibly inactivated by oxidation. This Streptococcus pyogenes serotype M6 (strain ATCC BAA-946 / MGAS10394) protein is Streptolysin O (slo).